A 141-amino-acid chain; its full sequence is Small ribosomal subunit protein bS18c (141 aa).

Disordered regions lie at residues 14–55 and 120–141; these read EFIA…IKPG and IKRR…RPKK. Residues 24 to 34 are compositionally biased toward pro residues; that stretch reads PKAPLQPPLPP. Basic residues predominate over residues 35–51; sequence SKRKGKPPKSPRRRSSR.

It belongs to the bacterial ribosomal protein bS18 family. Part of the 30S ribosomal subunit.

It is found in the plastid. It localises to the chloroplast. This Pelargonium hortorum (Common geranium) protein is Small ribosomal subunit protein bS18c.